A 514-amino-acid chain; its full sequence is MDVIKKKHWWQSDQLKWSVIGLLGLLVGYLVVLMYVQGEYLFAIMTLILSSAGLYIFANRKTYAWRYVYPGLAGMGLFVLFPLVCTIAIAFTNYSSTNQLTFERAQQVLMDRSYQAGKTYNFGLYPTGDEWQLALTDGETGKHYLSDAFSFGGEQKLQLKETDALPGGERANLRIITQNRLALNQITAVLPDESKVIMSSLRQFSGTRPLYTLADDGLLTNNQSGVKYRPNNDSGYYQSINADGSWGDEKLSPGYTVTIGAKNFTRVFTDEGIQKPFFAIFVWTVVFSVLTVVLTVAVGMVLACLVQWEALKGKAIYRVLLILPYAVPSFISILIFKGLFNQSFGEINMMLSALFGIKPAWFSDPNTARAMVIIVNTWLGYPYMMILCMGLLKAIPDDLYEASAMDGAGPFQNFFKITLPLLIKPLTPLMIASFAFNFNNFVLIQLLTNGGPDRLGTTTPAGYTDLLVSYTYRIAFEGGGGQDFGLAAAIATLIFLLVGALAIVNLKATRMKFD.

The Cytoplasmic portion of the chain corresponds to Met1 to Lys16. A helical transmembrane segment spans residues Trp17–Val36. Over Gln37–Glu39 the chain is Periplasmic. Residues Tyr40 to Phe57 traverse the membrane as a helical segment. Residues Ala58–Tyr69 are Cytoplasmic-facing. A helical membrane pass occupies residues Pro70–Thr92. The Periplasmic segment spans residues Asn93 to Trp283. The 225-residue stretch at Phe281–Asn505 folds into the ABC transmembrane type-1 domain. The helical transmembrane segment at Thr284–Val306 threads the bilayer. At Gln307–Arg318 the chain is on the cytoplasmic side. The helical transmembrane segment at Val319 to Asn341 threads the bilayer. The Periplasmic portion of the chain corresponds to Gln342–Arg369. The chain crosses the membrane as a helical span at residues Ala370–Leu392. Residues Lys393–Gln412 lie on the Cytoplasmic side of the membrane. A helical transmembrane segment spans residues Asn413–Ala435. Residues Phe436 to Asp483 are Periplasmic-facing. A helical transmembrane segment spans residues Phe484 to Leu506. At Lys507–Asp514 the chain is on the cytoplasmic side.

This sequence belongs to the binding-protein-dependent transport system permease family. MalFG subfamily. As to quaternary structure, the complex is composed of two ATP-binding proteins (MalK), two transmembrane proteins (MalG and MalF) and a solute-binding protein (MalE).

It is found in the cell inner membrane. Part of the ABC transporter complex MalEFGK involved in maltose/maltodextrin import. Probably responsible for the translocation of the substrate across the membrane. This chain is Maltose/maltodextrin transport system permease protein MalF (malF), found in Salmonella typhimurium (strain LT2 / SGSC1412 / ATCC 700720).